Here is a 905-residue protein sequence, read N- to C-terminus: Translation initiation factor IF-2 (905 aa).

The span at 50 to 62 shows a compositional bias: basic and acidic residues; the sequence is HYEAKGGEDKAAE. Residues 50 to 306 are disordered; that stretch reads HYEAKGGEDK…QKHEVGGVRL (257 aa). Residues 63 to 75 show a composition bias toward low complexity; sequence KNAPAATPASASK. The span at 89–125 shows a compositional bias: pro residues; it reads GPKPSAAPKPGAAPKPGGAPKPGGAPKPGATPKPGGA. The segment covering 161-171 has biased composition (low complexity); it reads PFSTGSSSDRP. Positions 233-276 are enriched in gly residues; sequence GSGGGGRGRGGRGGGPGHGGPGHGGFRGRGGRRGGTAGAFGRPG. Basic residues predominate over residues 280-290; it reads RRGKKSKRQKR. Residues 291–302 are compositionally biased toward basic and acidic residues; the sequence is HEFEEQQKHEVG. Residues 401–575 form the tr-type G domain; it reads KRPPVVTVMG…LTADAALELT (175 aa). The G1 stretch occupies residues 410–417; it reads GHVDHGKT. 410 to 417 is a GTP binding site; the sequence is GHVDHGKT. A G2 region spans residues 435–439; the sequence is GITQG. Residues 460-463 are G3; the sequence is DTPG. Residues 460–464 and 514–517 contribute to the GTP site; these read DTPGH and NKID. A G4 region spans residues 514–517; the sequence is NKID. Residues 550–552 are G5; that stretch reads SAK.

The protein belongs to the TRAFAC class translation factor GTPase superfamily. Classic translation factor GTPase family. IF-2 subfamily.

The protein resides in the cytoplasm. One of the essential components for the initiation of protein synthesis. Protects formylmethionyl-tRNA from spontaneous hydrolysis and promotes its binding to the 30S ribosomal subunits. Also involved in the hydrolysis of GTP during the formation of the 70S ribosomal complex. In Corynebacterium aurimucosum (strain ATCC 700975 / DSM 44827 / CIP 107346 / CN-1) (Corynebacterium nigricans), this protein is Translation initiation factor IF-2.